The chain runs to 471 residues: Sulfate adenylyltransferase subunit 1 (471 aa).

The tr-type G domain occupies 22–239; that stretch reads KDMLRFLTCG…NIEIGEDDNL (218 aa). Residues 31-38 are G1; that stretch reads GSVDDGKS. 31 to 38 lines the GTP pocket; that stretch reads GSVDDGKS. A G2 region spans residues 89–93; the sequence is GITID. Residues 110–113 are G3; it reads DTPG. GTP-binding positions include 110-114 and 165-168; these read DTPGH and NKMD. The tract at residues 165 to 168 is G4; sequence NKMD. Positions 202-204 are G5; sequence SAL.

The protein belongs to the TRAFAC class translation factor GTPase superfamily. Classic translation factor GTPase family. CysN/NodQ subfamily. Heterodimer composed of CysD, the smaller subunit, and CysN.

It carries out the reaction sulfate + ATP + H(+) = adenosine 5'-phosphosulfate + diphosphate. It participates in sulfur metabolism; hydrogen sulfide biosynthesis; sulfite from sulfate: step 1/3. Functionally, with CysD forms the ATP sulfurylase (ATPS) that catalyzes the adenylation of sulfate producing adenosine 5'-phosphosulfate (APS) and diphosphate, the first enzymatic step in sulfur assimilation pathway. APS synthesis involves the formation of a high-energy phosphoric-sulfuric acid anhydride bond driven by GTP hydrolysis by CysN coupled to ATP hydrolysis by CysD. The sequence is that of Sulfate adenylyltransferase subunit 1 from Alteromonas mediterranea (strain DSM 17117 / CIP 110805 / LMG 28347 / Deep ecotype).